A 174-amino-acid chain; its full sequence is Shikimate kinase (174 aa).

15 to 20 contacts ATP; the sequence is GTGKST. Ser19 contributes to the Mg(2+) binding site. Positions 37, 61, and 82 each coordinate substrate. Arg120 lines the ATP pocket. Arg138 lines the substrate pocket.

The protein belongs to the shikimate kinase family. As to quaternary structure, monomer. Mg(2+) serves as cofactor.

It localises to the cytoplasm. The catalysed reaction is shikimate + ATP = 3-phosphoshikimate + ADP + H(+). It functions in the pathway metabolic intermediate biosynthesis; chorismate biosynthesis; chorismate from D-erythrose 4-phosphate and phosphoenolpyruvate: step 5/7. Catalyzes the specific phosphorylation of the 3-hydroxyl group of shikimic acid using ATP as a cosubstrate. This chain is Shikimate kinase, found in Staphylococcus aureus (strain Mu3 / ATCC 700698).